A 313-amino-acid chain; its full sequence is Ribosomal RNA small subunit methyltransferase H (313 aa).

S-adenosyl-L-methionine is bound by residues 31 to 33 (GGH), Asp-51, Phe-77, Asp-95, and Gln-102.

The protein belongs to the methyltransferase superfamily. RsmH family.

It is found in the cytoplasm. It catalyses the reaction cytidine(1402) in 16S rRNA + S-adenosyl-L-methionine = N(4)-methylcytidine(1402) in 16S rRNA + S-adenosyl-L-homocysteine + H(+). In terms of biological role, specifically methylates the N4 position of cytidine in position 1402 (C1402) of 16S rRNA. The chain is Ribosomal RNA small subunit methyltransferase H from Xylella fastidiosa (strain M23).